The sequence spans 354 residues: S-adenosylmethionine:tRNA ribosyltransferase-isomerase (354 aa).

It belongs to the QueA family. In terms of assembly, monomer.

The protein localises to the cytoplasm. It catalyses the reaction 7-aminomethyl-7-carbaguanosine(34) in tRNA + S-adenosyl-L-methionine = epoxyqueuosine(34) in tRNA + adenine + L-methionine + 2 H(+). The protein operates within tRNA modification; tRNA-queuosine biosynthesis. In terms of biological role, transfers and isomerizes the ribose moiety from AdoMet to the 7-aminomethyl group of 7-deazaguanine (preQ1-tRNA) to give epoxyqueuosine (oQ-tRNA). In Salmonella typhi, this protein is S-adenosylmethionine:tRNA ribosyltransferase-isomerase.